The following is a 507-amino-acid chain: ATP synthase subunit alpha, chloroplastic (507 aa).

Gly-170–Thr-177 provides a ligand contact to ATP. The residue at position 257 (Thr-257) is a Phosphothreonine.

The protein belongs to the ATPase alpha/beta chains family. F-type ATPases have 2 components, CF(1) - the catalytic core - and CF(0) - the membrane proton channel. CF(1) has five subunits: alpha(3), beta(3), gamma(1), delta(1), epsilon(1). CF(0) has four main subunits: a, b, b' and c.

It localises to the plastid. It is found in the chloroplast thylakoid membrane. The catalysed reaction is ATP + H2O + 4 H(+)(in) = ADP + phosphate + 5 H(+)(out). In terms of biological role, produces ATP from ADP in the presence of a proton gradient across the membrane. The alpha chain is a regulatory subunit. This is ATP synthase subunit alpha, chloroplastic from Lepidium virginicum (Virginia pepperweed).